A 131-amino-acid polypeptide reads, in one-letter code: Probable flagellum biosynthesis repressor protein FlbT (131 aa).

The protein belongs to the FlbT family.

In terms of biological role, has a post-transcriptional repressor function in flagellum biogenesis. Associates with the 5'-UTR of fljK mRNA and promotes its degradation. This is Probable flagellum biosynthesis repressor protein FlbT from Caulobacter sp. (strain K31).